The sequence spans 153 residues: Endoribonuclease YbeY (153 aa).

Zn(2+)-binding residues include histidine 118, histidine 122, and histidine 128.

It belongs to the endoribonuclease YbeY family. Zn(2+) serves as cofactor.

Its subcellular location is the cytoplasm. Functionally, single strand-specific metallo-endoribonuclease involved in late-stage 70S ribosome quality control and in maturation of the 3' terminus of the 16S rRNA. The chain is Endoribonuclease YbeY from Staphylococcus haemolyticus (strain JCSC1435).